The following is a 512-amino-acid chain: GTPase Obg (512 aa).

The Obg domain maps to 2–159 (ATFVDTVTLH…GDVVLELKVV (158 aa)). Residues 160–336 (ADVALVGYPS…LSFALAELVE (177 aa)) form the OBG-type G domain. Residues 166-173 (GYPSAGKS), 191-195 (FTTLH), 212-215 (DVPG), 288-291 (NKID), and 317-319 (STV) contribute to the GTP site. Residues serine 173 and threonine 193 each contribute to the Mg(2+) site. Residues 355–439 (PRAVNEKPFT…GDGIVFDWEP (85 aa)) form the OCT domain. A disordered region spans residues 491–512 (GEAGLWADEDGTDEDASSDAKA). Over residues 497–512 (ADEDGTDEDASSDAKA) the composition is skewed to acidic residues.

It belongs to the TRAFAC class OBG-HflX-like GTPase superfamily. OBG GTPase family. Monomer. Requires Mg(2+) as cofactor.

The protein resides in the cytoplasm. An essential GTPase which binds GTP, GDP and possibly (p)ppGpp with moderate affinity, with high nucleotide exchange rates and a fairly low GTP hydrolysis rate. Plays a role in control of the cell cycle, stress response, ribosome biogenesis and in those bacteria that undergo differentiation, in morphogenesis control. In Clavibacter michiganensis subsp. michiganensis (strain NCPPB 382), this protein is GTPase Obg.